Consider the following 50-residue polypeptide: MREAIHLGCEKCTRRNYHTTKNKKTHTEKFSVKKYCKFCREHTLHKEMKL.

This sequence belongs to the bacterial ribosomal protein bL33 family.

The protein is Large ribosomal subunit protein bL33 of Sulfurimonas denitrificans (strain ATCC 33889 / DSM 1251) (Thiomicrospira denitrificans (strain ATCC 33889 / DSM 1251)).